A 335-amino-acid chain; its full sequence is RNA polymerase sigma factor RpoS (335 aa).

The tract at residues 57-90 (DATQMYLSEIGFSPLLTAEEEVLYARRALRGDEA) is sigma-70 factor domain-1. The interval 95-165 (MIESNLRLVV…ERALMNQTRT (71 aa)) is sigma-70 factor domain-2. An Interaction with polymerase core subunit RpoC motif is present at residues 119-122 (DLIE). The sigma-70 factor domain-3 stretch occupies residues 175–250 (ELNIYLRTAR…DSHNADPEFS (76 aa)). Positions 263–316 (WLDELNPKQKEVLARRFGLLGYEPSTLEEVGREINLTRERVRQIQVEGLRRLRE) are sigma-70 factor domain-4. Residues 289–308 (LEEVGREINLTRERVRQIQV) constitute a DNA-binding region (H-T-H motif).

The protein belongs to the sigma-70 factor family. RpoS subfamily. In terms of assembly, interacts with the RNA polymerase core enzyme.

The protein localises to the cytoplasm. Functionally, sigma factors are initiation factors that promote the attachment of RNA polymerase to specific initiation sites and are then released. This sigma factor is the master transcriptional regulator of the stationary phase and the general stress response. May be required for the persistence of V.cholerae in aquatic habitats. This Vibrio cholerae serotype O1 (strain ATCC 39315 / El Tor Inaba N16961) protein is RNA polymerase sigma factor RpoS.